The primary structure comprises 143 residues: Myosin 1 light chain cam2 (143 aa).

EF-hand domains lie at 6–41 (EQTD…LGIN), 75–110 (ESEE…LGEK), and 111–143 (LSDN…IMAK).

It belongs to the calmodulin family. In terms of assembly, interacts with myo1 and pik1.

The protein localises to the cytoplasm. It localises to the prospore membrane. Plays a role in meiosis and sporulation. The polypeptide is Myosin 1 light chain cam2 (Schizosaccharomyces pombe (strain 972 / ATCC 24843) (Fission yeast)).